The chain runs to 1332 residues: Sister chromatid cohesion protein PDS5 homolog A (1332 aa).

Residue Met-1 is modified to N-acetylmethionine. The stretch at 392-428 is one HEAT repeat; sequence ALVNDQLLGFVRERTLDKRWRVRKEAMMGLAQLYKKY. Residue Ser-1096 is modified to Phosphoserine. Residues 1138–1332 form a disordered region; it reads GVLGTVNKPL…PAERQIDLQR (195 aa). N6-acetyllysine is present on Lys-1145. A compositionally biased stretch (polar residues) spans 1160–1173; sequence GTETGSNINANSEL. Phosphoserine occurs at positions 1174 and 1194. Phosphothreonine is present on Thr-1207. Lys-1210 carries the N6-acetyllysine modification. Over residues 1222–1232 the composition is skewed to polar residues; it reads SDQSTQGNISS. An N6-acetyllysine modification is found at Lys-1288. A Phosphoserine modification is found at Ser-1303. A compositionally biased stretch (basic and acidic residues) spans 1316–1332; the sequence is DGAKKAVPAERQIDLQR.

It belongs to the PDS5 family. As to quaternary structure, interacts with the cohesin complex. Interacts with WAPL (via FGF motifs) or CDCA5 (via the FGF motif); the interaction is direct, cohesin-dependent and competitive. Interacts with SMC3. Interacts with TP63.

Its subcellular location is the nucleus. Probable regulator of sister chromatid cohesion in mitosis which may stabilize cohesin complex association with chromatin. May couple sister chromatid cohesion during mitosis to DNA replication. Cohesion ensures that chromosome partitioning is accurate in both meiotic and mitotic cells and plays an important role in DNA repair. The sequence is that of Sister chromatid cohesion protein PDS5 homolog A (Pds5a) from Mus musculus (Mouse).